The following is a 159-amino-acid chain: SsrA-binding protein (159 aa).

The protein belongs to the SmpB family.

It localises to the cytoplasm. Functionally, required for rescue of stalled ribosomes mediated by trans-translation. Binds to transfer-messenger RNA (tmRNA), required for stable association of tmRNA with ribosomes. tmRNA and SmpB together mimic tRNA shape, replacing the anticodon stem-loop with SmpB. tmRNA is encoded by the ssrA gene; the 2 termini fold to resemble tRNA(Ala) and it encodes a 'tag peptide', a short internal open reading frame. During trans-translation Ala-aminoacylated tmRNA acts like a tRNA, entering the A-site of stalled ribosomes, displacing the stalled mRNA. The ribosome then switches to translate the ORF on the tmRNA; the nascent peptide is terminated with the 'tag peptide' encoded by the tmRNA and targeted for degradation. The ribosome is freed to recommence translation, which seems to be the essential function of trans-translation. The protein is SsrA-binding protein of Acidothermus cellulolyticus (strain ATCC 43068 / DSM 8971 / 11B).